Reading from the N-terminus, the 324-residue chain is Homeobox protein Nkx-2.5 (324 aa).

The segment at residues 138 to 197 (RRKPRVLFSQAQVYELERRFKQQRYLSAPERDQLASVLKLTSTQVKIWFQNRRYKCKRQR) is a DNA-binding region (homeobox).

This sequence belongs to the NK-2 homeobox family. In terms of assembly, homodimer (via the homeobox); binds DNA as homodimer. Interacts (via the homeobox) with TBX5 (via the T-box); this complex binds DNA. Interacts with HIPK1 and HIPK2, but not HIPK3. Interacts with the C-terminal zinc finger of GATA4 through its homeobox domain. Also interacts with JARID2 which represses its ability to activate transcription of ANF. Interacts with FBLIM1. Interacts with TBX18. Interacts with histone methyltransferase NSD2 (via HMG box). Interacts with NEDD9. Interacts with TBX1. As to expression, expressed only in the heart.

It is found in the nucleus. Transcription factor required for the development of the heart and the spleen. During heart development, acts as a transcriptional activator of NPPA/ANF in cooperation with GATA4. May cooperate with TBX2 to negatively modulate expression of NPPA/ANF in the atrioventricular canal. Binds to the core DNA motif of NPPA promoter. Together with PBX1, required for spleen development through a mechanism that involves CDKN2B repression. Positively regulates transcription of genes such as COL3A1 and MMP2, resulting in increased pulmonary endothelial fibrosis in response to hypoxia. In Homo sapiens (Human), this protein is Homeobox protein Nkx-2.5 (NKX2-5).